We begin with the raw amino-acid sequence, 121 residues long: MSITKDQIIEGVAALSVMEIVELISAMEEKFGVSAAAAVAGPAAAAEAVEEKTEFDVVLKAIGANKVAVIKAVRGATGLGLKEAKDLVESAPAALKEGISKDDAEALKKVLEEAGAEVEVK.

The protein belongs to the bacterial ribosomal protein bL12 family. As to quaternary structure, homodimer. Part of the ribosomal stalk of the 50S ribosomal subunit. Forms a multimeric L10(L12)X complex, where L10 forms an elongated spine to which 2 to 4 L12 dimers bind in a sequential fashion. Binds GTP-bound translation factors.

Forms part of the ribosomal stalk which helps the ribosome interact with GTP-bound translation factors. Is thus essential for accurate translation. This Erwinia tasmaniensis (strain DSM 17950 / CFBP 7177 / CIP 109463 / NCPPB 4357 / Et1/99) protein is Large ribosomal subunit protein bL12.